Reading from the N-terminus, the 36-residue chain is Photosystem I reaction center subunit VIII (36 aa).

The chain crosses the membrane as a helical span at residues 6-28; that stretch reads LPSIFVPXVGLVFPAIAMASXFL.

Belongs to the PsaI family.

The protein resides in the plastid. It is found in the chloroplast thylakoid membrane. In terms of biological role, may help in the organization of the PsaL subunit. In Acorus gramineus (Dwarf sweet flag), this protein is Photosystem I reaction center subunit VIII.